Here is a 148-residue protein sequence, read N- to C-terminus: Deoxyuridine 5'-triphosphate nucleotidohydrolase (148 aa).

Residues 65-67 (RSG), Asn-78, 82-84 (TID), and Lys-92 contribute to the substrate site.

This sequence belongs to the dUTPase family. Requires Mg(2+) as cofactor.

The enzyme catalyses dUTP + H2O = dUMP + diphosphate + H(+). It participates in pyrimidine metabolism; dUMP biosynthesis; dUMP from dCTP (dUTP route): step 2/2. Functionally, this enzyme is involved in nucleotide metabolism: it produces dUMP, the immediate precursor of thymidine nucleotides and it decreases the intracellular concentration of dUTP so that uracil cannot be incorporated into DNA. In Chlorobium luteolum (strain DSM 273 / BCRC 81028 / 2530) (Pelodictyon luteolum), this protein is Deoxyuridine 5'-triphosphate nucleotidohydrolase.